A 147-amino-acid chain; its full sequence is Putative 2'-deoxynucleoside 5'-phosphate N-hydrolase 1 (147 aa).

Substrate-binding positions include 10-16 (YFCGSIR), Y25, H42, E90, and 114-116 (SAM).

The protein belongs to the 2'-deoxynucleoside 5'-phosphate N-hydrolase 1 family. Monomer and homodimer.

It is found in the cytoplasm. The protein resides in the nucleus. The catalysed reaction is a pyrimidine 2'-deoxyribonucleoside 5'-phosphate + H2O = a pyrimidine nucleobase + 2-deoxy-D-ribose 5-phosphate. It catalyses the reaction a purine 2'-deoxyribonucleoside 5'-phosphate + H2O = a purine nucleobase + 2-deoxy-D-ribose 5-phosphate. Its function is as follows. Catalyzes the cleavage of the N-glycosidic bond of deoxyribonucleoside 5'-monophosphates to yield deoxyribose 5-phosphate and a purine or pyrimidine base. The chain is Putative 2'-deoxynucleoside 5'-phosphate N-hydrolase 1 from Nematostella vectensis (Starlet sea anemone).